The following is a 125-amino-acid chain: Large ribosomal subunit protein bL21 (125 aa).

This sequence belongs to the bacterial ribosomal protein bL21 family. As to quaternary structure, part of the 50S ribosomal subunit. Contacts protein L20.

This protein binds to 23S rRNA in the presence of protein L20. The protein is Large ribosomal subunit protein bL21 of Synechococcus sp. (strain CC9311).